A 172-amino-acid chain; its full sequence is Nicotinamide-nucleotide adenylyltransferase (172 aa).

Belongs to the archaeal NMN adenylyltransferase family.

Its subcellular location is the cytoplasm. It catalyses the reaction beta-nicotinamide D-ribonucleotide + ATP + H(+) = diphosphate + NAD(+). It participates in cofactor biosynthesis; NAD(+) biosynthesis; NAD(+) from nicotinamide D-ribonucleotide: step 1/1. This chain is Nicotinamide-nucleotide adenylyltransferase, found in Methanococcus vannielii (strain ATCC 35089 / DSM 1224 / JCM 13029 / OCM 148 / SB).